The following is a 313-amino-acid chain: Acetaldehyde dehydrogenase (313 aa).

Position 12-15 (12-15) interacts with NAD(+); it reads SGNI. The Acyl-thioester intermediate role is filled by cysteine 132. Residues 163–171 and asparagine 291 contribute to the NAD(+) site; that span reads SAGPGTRAN.

The protein belongs to the acetaldehyde dehydrogenase family.

The enzyme catalyses acetaldehyde + NAD(+) + CoA = acetyl-CoA + NADH + H(+). The chain is Acetaldehyde dehydrogenase (bphG) from Burkholderia cepacia (Pseudomonas cepacia).